Consider the following 107-residue polypeptide: U1-lycotoxin-Ls1d (107 aa).

The signal sequence occupies residues 1-20; the sequence is MMKVLVVVALLVTLISYSSS. A propeptide spanning residues 21-41 is cleaved from the precursor; it reads EGIDDLEADELLSLMANEQTR. Disulfide bonds link cysteine 44–cysteine 59, cysteine 51–cysteine 68, cysteine 58–cysteine 86, and cysteine 70–cysteine 84.

Belongs to the neurotoxin 19 (CSTX) family. 04 (U1-Lctx) subfamily. As to expression, expressed by the venom gland.

It localises to the secreted. The chain is U1-lycotoxin-Ls1d from Lycosa singoriensis (Wolf spider).